Consider the following 513-residue polypeptide: Transmembrane protein 151B (513 aa).

The disordered stretch occupies residues methionine 1–proline 29. Basic and acidic residues predominate over residues glutamate 14–arginine 28. 3 helical membrane-spanning segments follow: residues cysteine 46–threonine 66, tyrosine 93–tryptophan 113, and leucine 274–proline 294. 3 N-linked (GlcNAc...) asparagine glycosylation sites follow: asparagine 366, asparagine 418, and asparagine 505.

It belongs to the TMEM151 family.

It is found in the membrane. The sequence is that of Transmembrane protein 151B (tmem151b) from Danio rerio (Zebrafish).